A 55-amino-acid chain; its full sequence is Large ribosomal subunit protein bL32 (55 aa).

This sequence belongs to the bacterial ribosomal protein bL32 family.

The chain is Large ribosomal subunit protein bL32 from Aeromonas hydrophila subsp. hydrophila (strain ATCC 7966 / DSM 30187 / BCRC 13018 / CCUG 14551 / JCM 1027 / KCTC 2358 / NCIMB 9240 / NCTC 8049).